A 179-amino-acid polypeptide reads, in one-letter code: Inner membrane-spanning protein YciB (179 aa).

5 helical membrane passes run 22 to 42 (IYAA…YSWV), 50 to 70 (MALI…FFHN), 76 to 96 (WKVT…QWVM), 121 to 141 (LAWA…AFWL), and 149 to 169 (FKVF…GVYI).

This sequence belongs to the YciB family.

It is found in the cell inner membrane. Functionally, plays a role in cell envelope biogenesis, maintenance of cell envelope integrity and membrane homeostasis. The polypeptide is Inner membrane-spanning protein YciB (Salmonella dublin (strain CT_02021853)).